Consider the following 314-residue polypeptide: Calcium homeostasis modulator protein 4 (314 aa).

The Cytoplasmic segment spans residues 1–14 (MCPTLNNIVSSLQR). Residues 15 to 37 (NGIFINSLIAALTIGGQQLFSSS) form a helical membrane-spanning segment. Topologically, residues 38-48 (TFSCPCQVGKN) are extracellular. 2 disulfides stabilise this stretch: Cys-41-Cys-131 and Cys-43-Cys-162. A helical transmembrane segment spans residues 49 to 71 (FYYGSAFLVIPALILLVAGFALR). At 72–103 (SQMWTITGEYCCSCAPPYRRISPLECKLACLR) the chain is on the cytoplasmic side. Residues 104–129 (FFSITGRAVIAPLTWLAVTLLTGTYY) traverse the membrane as a helical segment. Topologically, residues 130 to 183 (ECAASEFASVDHYPMFDNVSASKREEILAGFPCCRSAPSDVILVRDEIALLHRY) are extracellular. Residues 184–207 (QSQMLGWILITLATIAALVSCCVA) traverse the membrane as a helical segment. Residues 208-314 (KCCSPLTSLQ…DRSRGIELKP (107 aa)) lie on the Cytoplasmic side of the membrane.

This sequence belongs to the CALHM family. Oligomerizes to form decameric and undecameric channels. Two hemichannels can assemble in a tail-to-tail manner to form a gap junction. Placenta.

The protein resides in the cell membrane. Its function is as follows. May assemble to form gap junction channel-like structures involved in intercellular communication. Channel gating and ion conductance are likely regulated by membrane lipids rather than by membrane depolarization or extracellular calcium levels. The polypeptide is Calcium homeostasis modulator protein 4 (Homo sapiens (Human)).